A 261-amino-acid chain; its full sequence is Undecaprenyl-diphosphatase (261 aa).

8 helical membrane passes run 1–21 (MNYI…FLPV), 41–61 (FTKL…VVLY), 69–89 (LDFY…GLLF), 95–115 (ALLE…IILL), 129–149 (ITYL…IPGV), 169–186 (AAEF…GATL), 206–226 (ILII…KTFI), and 241–261 (RIVA…LTLI).

It belongs to the UppP family.

The protein localises to the cell inner membrane. It carries out the reaction di-trans,octa-cis-undecaprenyl diphosphate + H2O = di-trans,octa-cis-undecaprenyl phosphate + phosphate + H(+). Its function is as follows. Catalyzes the dephosphorylation of undecaprenyl diphosphate (UPP). Confers resistance to bacitracin. This Flavobacterium psychrophilum (strain ATCC 49511 / DSM 21280 / CIP 103535 / JIP02/86) protein is Undecaprenyl-diphosphatase.